Here is a 274-residue protein sequence, read N- to C-terminus: Secreted RxLR effector protein 40 (274 aa).

The signal sequence occupies residues 1 to 21 (MRLYTQVVAASLVATLAIVDS). A RxLR-dEER motif is present at residues 35–53 (RFLRQDNATVARVSEDGER). 3 N-linked (GlcNAc...) asparagine glycosylation sites follow: Asn-41, Asn-74, and Asn-258.

It belongs to the RxLR effector family.

Its subcellular location is the secreted. It localises to the host nucleus. It is found in the host cytoplasm. Its function is as follows. Secreted effector that completely suppresses the host cell death induced by cell death-inducing proteins. In Plasmopara viticola (Downy mildew of grapevine), this protein is Secreted RxLR effector protein 40.